The chain runs to 1076 residues: MRSFIKAHKKSTSFDESPKRHSNFSGNTNNSSQRSSDDSLDFLPSTPSQMNYDSIPPPAKHSPGFESFHRLANKTSKLFKKTSNSNLNSHLASTPTTSTNQTTSNSFVLQNPPTKNTGPPPPLPPPLFPSSSTSSFSRHDNESEYTAYKKTSPAKDFNRTTDSLPAIKGTITHSWGDSKVESHVIILNDPASPASNTSEATSSKQFKTPIIGNENLTSTTSPSNLEPAIRILNKNKGKQQENIDDAEDGSSKKEHHVYKALALAKNRNRQARIHSHDDIINLGKASQMDMSLLAAAFSGNSTTTINNDQSSNEQTDEKILDIERVTTTSTLTSSETTSPINKSPCFYSQTLSLSPKIRHGDLQSSPSKVNKNDSQNETLNKKKVRISLNRKEEEKVYSLNNNSDEYSVNEKETHKANDCNDESSENGDGDNDHDDDYDDDDDDDDDDDESEFSFEYAGINVRTSSVKYYSKPEPAANVYIDDLYEDENFDDDMNCIEDDESGNEGNEICGLSTRFEETSLKSNKVKKFNDLFNLSDDDEEEDGKDNSNNGDENESDNLYQKRLENGKETFNGNHGGHHDDASLGETVDNKEQFLINDNVKKPIQKYNDLFDLSDEDDNDDKEMSEAESYMFSDEAPSIESGPANAKSTRGIYSQSNKNIIRDGKPNYSFSLKRNNSDDETEHTSAIKASLTGTTGSTKPTVKSFSDIFNVDDSASDAESDSGTGGNNSNGLVSNDSERQVSLQSSLYETKSESHPPNHPHSQILQTPAKIVITPSVSDAQSQALAITDDDGEDDDDDTSSILRTPFQLIDSSHSQQPHYASPQYTAVLNSPPLPPPARSQSLKYHDLNCDLDSEVPRPMSNLFFIDEAEEDEYNQKSKFFDFDHYDIDEINGIPEDFNFSDSERDDLNRRTLKSPLRGGSKNREVSPFSSVSSSFRSTHSFNGKLTINQGAKELAPMKNKIELTNKTVTFFNSNNWNTYDCNSLSRKTSSQMRDSKYQNHNVGQNVEPSSVLSPQHQISNGLDGKCNDNYVISPNLPTTITPTNSFTKPTPEFSNDYSLSPIQETPSSVQSSPKRA.

Residues 1–11 are compositionally biased toward basic residues; sequence MRSFIKAHKKS. 4 disordered regions span residues 1 to 66, 85 to 162, 190 to 223, and 234 to 253; these read MRSF…PGFE, SNLN…RTTD, PASPASNTSEATSSKQFKTPIIGNENLTSTTSPS, and KNKGKQQENIDDAEDGSSKK. Residues 23-34 show a composition bias toward polar residues; that stretch reads NFSGNTNNSSQR. Low complexity predominate over residues 93–106; the sequence is STPTTSTNQTTSNS. A compositionally biased stretch (polar residues) spans 107 to 117; the sequence is FVLQNPPTKNT. Pro residues predominate over residues 118–128; that stretch reads GPPPPLPPPLF. 2 stretches are compositionally biased toward polar residues: residues 193 to 206 and 214 to 223; these read PASNTSEATSSKQF and ENLTSTTSPS. Serine 275 and serine 354 each carry phosphoserine. Disordered regions lie at residues 357-450, 534-557, and 566-585; these read IRHG…DDES, LSDDDEEEDGKDNSNNGDENESDN, and GKETFNGNHGGHHDDASLGE. Over residues 362-378 the composition is skewed to polar residues; the sequence is LQSSPSKVNKNDSQNET. Phosphoserine occurs at positions 403 and 407. Residues 408–418 are compositionally biased toward basic and acidic residues; sequence VNEKETHKAND. Residues 419–450 are compositionally biased toward acidic residues; that stretch reads CNDESSENGDGDNDHDDDYDDDDDDDDDDDES. The segment covering 576–585 has biased composition (basic and acidic residues); it reads GHHDDASLGE. Phosphoserine is present on residues serine 632 and serine 676. Disordered stretches follow at residues 658 to 701, 713 to 762, 909 to 931, 1000 to 1020, and 1042 to 1076; these read NIIR…KPTV, SASD…PHSQ, RRTLKSPLRGGSKNREVSPFSSV, HNVGQNVEPSSVLSPQHQISN, and PTNSFTKPTPEFSNDYSLSPIQETPSSVQSSPKRA. 2 stretches are compositionally biased toward polar residues: residues 690–701 and 739–748; these read LTGTTGSTKPTV and QVSLQSSLYE.

This sequence belongs to the ZRG8 family. In terms of assembly, interacts with BUD27, GIS1 and SSD1.

The protein resides in the cytoplasm. It is found in the bud. Its subcellular location is the bud neck. It localises to the bud tip. Functionally, involved in the integrity functions of RAM, a conserved signaling network that regulates maintenance of polarized growth and daughter-cell-specific transcription. The sequence is that of Zinc-regulated protein 8 (ZRG8) from Saccharomyces cerevisiae (strain ATCC 204508 / S288c) (Baker's yeast).